The sequence spans 105 residues: Chloroacetanilide N-alkylformylase 1, ferredoxin component (105 aa).

The 2Fe-2S ferredoxin-type domain occupies 2 to 105 (PTIIVTTRDG…GLRVAIAPED (104 aa)). The [2Fe-2S] cluster site is built by C40, C46, C49, and C86.

It belongs to the adrenodoxin/putidaredoxin family. In terms of assembly, the chloroacetanilide N-alkylformylase multicomponent enzyme system is composed of an oxygenase component (CndA) and an electron transfer component formed by a ferredoxin reductase (CndC1) and a ferredoxin (CndB1). In vitro, chloroacetanilide N-alkylformylase assays in which CndB1 is substituted for CndB2 demonstrate that the two enzymes possess nearly identical activities. [2Fe-2S] cluster serves as cofactor.

Its function is as follows. Component of the chloroacetanilide N-alkylformylase multicomponent enzyme system involved in the degradation of chloroacetanilide herbicides (N-alkoxyalkyl-N-chloroacetyl-substituted aniline derivatives). In vitro, functions as an intermediate electron transfer protein. The chain is Chloroacetanilide N-alkylformylase 1, ferredoxin component from Rhizorhabdus wittichii (strain DC-6 / KACC 16600) (Sphingomonas wittichii).